Consider the following 333-residue polypeptide: D-fructose 1,6-bisphosphatase class 2/sedoheptulose 1,7-bisphosphatase (333 aa).

Mn(2+) contacts are provided by Asp-33, Glu-57, Asp-85, and Glu-88. Residues 88 to 90 (EGT), Tyr-119, 164 to 166 (RTR), and 186 to 188 (DGD) contribute to the substrate site. A Mn(2+)-binding site is contributed by Glu-213.

Belongs to the FBPase class 2 family. In terms of assembly, homotetramer. The cofactor is Mn(2+).

It carries out the reaction beta-D-fructose 1,6-bisphosphate + H2O = beta-D-fructose 6-phosphate + phosphate. The enzyme catalyses D-sedoheptulose 1,7-bisphosphate + H2O = D-sedoheptulose 7-phosphate + phosphate. The protein operates within carbohydrate biosynthesis; Calvin cycle. Functionally, catalyzes the hydrolysis of fructose 1,6-bisphosphate (Fru 1,6-P2) and sedoheptulose 1,7-bisphosphate (Sed 1,7-P2) to fructose 6-phosphate and sedoheptulose 7-phosphate, respectively. This Prochlorococcus marinus (strain MIT 9301) protein is D-fructose 1,6-bisphosphatase class 2/sedoheptulose 1,7-bisphosphatase.